The sequence spans 208 residues: Large ribosomal subunit protein uL3 (208 aa).

Glutamine 149 carries the N5-methylglutamine modification.

Belongs to the universal ribosomal protein uL3 family. Part of the 50S ribosomal subunit. Forms a cluster with proteins L14 and L19. In terms of processing, methylated by PrmB.

One of the primary rRNA binding proteins, it binds directly near the 3'-end of the 23S rRNA, where it nucleates assembly of the 50S subunit. This chain is Large ribosomal subunit protein uL3, found in Haemophilus ducreyi (strain 35000HP / ATCC 700724).